We begin with the raw amino-acid sequence, 222 residues long: Sugar fermentation stimulation protein homolog (222 aa).

Belongs to the SfsA family.

The chain is Sugar fermentation stimulation protein homolog from Thermotoga sp. (strain RQ2).